A 183-amino-acid polypeptide reads, in one-letter code: Neuronal synaptobrevin (183 aa).

Low complexity predominate over residues 1 to 17 (MADAAPAGDAPPNAGAP). A disordered region spans residues 1–32 (MADAAPAGDAPPNAGAPAGEGGDGEIVGGPHN). Topologically, residues 1 to 106 (MADAAPAGDA…KFWLQNLKMM (106 aa)) are cytoplasmic. Gly residues predominate over residues 18-27 (AGEGGDGEIV). A v-SNARE coiled-coil homology domain is found at 41–101 (RLQQTQAQVD…GKLKRKFWLQ (61 aa)). The chain crosses the membrane as a helical span at residues 107–127 (IIMGVIGLVVVGIIANKLGLI). At 128–183 (GGEQPPQYQYPPQYMQPPPPPPQQPAGGQSSLVDAAGAGDGAGAGGSAGAGDHGGV) the chain is on the vesicular side. Positions 135–183 (YQYPPQYMQPPPPPPQQPAGGQSSLVDAAGAGDGAGAGGSAGAGDHGGV) are disordered. Over residues 141–151 (YMQPPPPPPQQ) the composition is skewed to pro residues. Gly residues predominate over residues 165–183 (AGDGAGAGGSAGAGDHGGV).

This sequence belongs to the synaptobrevin family. In terms of assembly, part of the SNARE core complex containing Snap25 and syntaxin. As to expression, specifically expressed in neurons and synapses.

Its subcellular location is the cytoplasmic vesicle. The protein localises to the secretory vesicle. The protein resides in the synaptic vesicle membrane. It is found in the early endosome membrane. Functionally, involved in the targeting and/or fusion of transport vesicles to their target membrane. Major SNARE protein of synaptic vesicles which mediates fusion of synaptic vesicles to release neurotransmitters. Essential for fast vesicular exocytosis and activity-dependent neurotransmitter release as well as fast endocytosis that mediates rapid reuse of synaptic vesicles. Also involved in a neuron-specific sort-and-degrade mechanism that promotes endolysosomal degradation and is required for neuronal maintenance. This Drosophila melanogaster (Fruit fly) protein is Neuronal synaptobrevin.